Reading from the N-terminus, the 613-residue chain is Glutamyl-tRNA(Gln) amidotransferase subunit E (613 aa).

It belongs to the GatB/GatE family. GatE subfamily. As to quaternary structure, heterodimer of GatD and GatE.

The enzyme catalyses L-glutamyl-tRNA(Gln) + L-glutamine + ATP + H2O = L-glutaminyl-tRNA(Gln) + L-glutamate + ADP + phosphate + H(+). Allows the formation of correctly charged Gln-tRNA(Gln) through the transamidation of misacylated Glu-tRNA(Gln) in organisms which lack glutaminyl-tRNA synthetase. The reaction takes place in the presence of glutamine and ATP through an activated gamma-phospho-Glu-tRNA(Gln). The GatDE system is specific for glutamate and does not act on aspartate. This is Glutamyl-tRNA(Gln) amidotransferase subunit E from Archaeoglobus fulgidus (strain ATCC 49558 / DSM 4304 / JCM 9628 / NBRC 100126 / VC-16).